The primary structure comprises 268 residues: Kynurenine formamidase (268 aa).

The HGGXW motif lies at 33-37 (HGGGW). Ser-107 serves as the catalytic Nucleophile. Catalysis depends on residues Asp-219 and His-251.

It belongs to the kynurenine formamidase family. In terms of assembly, homodimer.

It catalyses the reaction N-formyl-L-kynurenine + H2O = L-kynurenine + formate + H(+). It participates in amino-acid degradation; L-tryptophan degradation via kynurenine pathway; L-kynurenine from L-tryptophan: step 2/2. Functionally, catalyzes the hydrolysis of N-formyl-L-kynurenine to L-kynurenine, the second step in the kynurenine pathway of tryptophan degradation. Kynurenine may be further oxidized to nicotinic acid, NAD(H) and NADP(H). Required for elimination of toxic metabolites. This Scheffersomyces stipitis (strain ATCC 58785 / CBS 6054 / NBRC 10063 / NRRL Y-11545) (Yeast) protein is Kynurenine formamidase.